We begin with the raw amino-acid sequence, 167 residues long: Endoribonuclease YbeY (167 aa).

His131, His135, and His141 together coordinate Zn(2+).

It belongs to the endoribonuclease YbeY family. It depends on Zn(2+) as a cofactor.

The protein localises to the cytoplasm. Its function is as follows. Single strand-specific metallo-endoribonuclease involved in late-stage 70S ribosome quality control and in maturation of the 3' terminus of the 16S rRNA. The polypeptide is Endoribonuclease YbeY (Rickettsia felis (strain ATCC VR-1525 / URRWXCal2) (Rickettsia azadi)).